Reading from the N-terminus, the 501-residue chain is Probable cytosol aminopeptidase (501 aa).

Mn(2+) is bound by residues K268 and D273. K280 is an active-site residue. Mn(2+) contacts are provided by D291, D350, and E352. The active site involves R354.

This sequence belongs to the peptidase M17 family. It depends on Mn(2+) as a cofactor.

The protein resides in the cytoplasm. The enzyme catalyses Release of an N-terminal amino acid, Xaa-|-Yaa-, in which Xaa is preferably Leu, but may be other amino acids including Pro although not Arg or Lys, and Yaa may be Pro. Amino acid amides and methyl esters are also readily hydrolyzed, but rates on arylamides are exceedingly low.. The catalysed reaction is Release of an N-terminal amino acid, preferentially leucine, but not glutamic or aspartic acids.. Its function is as follows. Presumably involved in the processing and regular turnover of intracellular proteins. Catalyzes the removal of unsubstituted N-terminal amino acids from various peptides. The sequence is that of Probable cytosol aminopeptidase from Colwellia psychrerythraea (strain 34H / ATCC BAA-681) (Vibrio psychroerythus).